The chain runs to 715 residues: MTTTSAFMLNVRLDNVAVVAIDVPGEKVNTLKAEFAAQVRAILKQIRENKALQGVVFISAKADNFIAGADINMIGHCQNAQEAETLARQGQQLMAEIQALPVPVIAAIHGACLGGGLEMALACHRRICTDDVKTVLGLPEVQLGLLPGSGGTQRLPRLVGVSTALDMILTGKQLRARQALKAGLVDDVVPQTILLEAAVELAKKERLAQRTLPVRERILAGPLGRALLFRLVRKKTAQKTQGNYPATERIIDVIETGLAQGSSSGYDAEARAFGELAMTPQSQALRAVFFASTEVKKDPGSDAPPGPLNSVGILGGGLMGGGIAWVTACKGGLPVRIKDINTQGINHALKYSWDLLETKVRRRHIKANERDKQLALISGSTDYRGFSHRDLVIEAVFEDLPLKQQMVAEVEQNCAAHTIFASNTSSLPIGDIAANAARPEQVIGLHFFSPVEKMPLVEVIPHASTSAQTIATTVKLAKKQGKTPIVVSDKAGFYVNRILAPYINKAIRMLTEGERVEHIDAALVKFGFPVGPIQLLDEVGIDTGTKIIPVLEAAYGERFSAPANVVASILNDDRKGRKNGRGFYLYGEKGRKSKKQVDPAIYKLIGVQGQSRLSAQQVAERCVMLMLNEAARCFDEKVIRSARDGDIGAVFGIGFPPFLGGPFRYMDALGPGEMVATLQRLAALYGPRYAPCEQLVRMAERREHFWTNGETDQGN.

The enoyl-CoA hydratase stretch occupies residues 1-190 (MTTTSAFMLN…KAGLVDDVVP (190 aa)). The 3-hydroxyacyl-CoA dehydrogenase stretch occupies residues 306-715 (GPLNSVGILG…WTNGETDQGN (410 aa)).

It in the N-terminal section; belongs to the enoyl-CoA hydratase/isomerase family. This sequence in the central section; belongs to the 3-hydroxyacyl-CoA dehydrogenase family. Heterotetramer of two alpha chains (FadJ) and two beta chains (FadI).

It localises to the cytoplasm. It carries out the reaction a (3S)-3-hydroxyacyl-CoA = a (2E)-enoyl-CoA + H2O. The enzyme catalyses a 4-saturated-(3S)-3-hydroxyacyl-CoA = a (3E)-enoyl-CoA + H2O. The catalysed reaction is a (3S)-3-hydroxyacyl-CoA + NAD(+) = a 3-oxoacyl-CoA + NADH + H(+). It catalyses the reaction (3S)-3-hydroxybutanoyl-CoA = (3R)-3-hydroxybutanoyl-CoA. Its pathway is lipid metabolism; fatty acid beta-oxidation. Functionally, catalyzes the formation of a hydroxyacyl-CoA by addition of water on enoyl-CoA. Also exhibits 3-hydroxyacyl-CoA epimerase and 3-hydroxyacyl-CoA dehydrogenase activities. The chain is Fatty acid oxidation complex subunit alpha from Salmonella gallinarum (strain 287/91 / NCTC 13346).